Consider the following 81-residue polypeptide: Protein Vpu (81 aa).

At 1–7 (MQSLEIV) the chain is on the extracellular side. Residues 8 to 28 (AIVELVVAAIIAIVVWTIVFI) form a helical membrane-spanning segment. Over 29–81 (EYRKILRQRKIDRLIDRIREREEDNGNESEGDQEELSALVEMGHHAPWNVDDL) the chain is Cytoplasmic. Positions 50–81 (EEDNGNESEGDQEELSALVEMGHHAPWNVDDL) are disordered. Residues 53–63 (NGNESEGDQEE) show a composition bias toward acidic residues. Residue S57 is modified to Phosphoserine; by host CK2.

Belongs to the HIV-1 VPU protein family. As to quaternary structure, homopentamer. Interacts with host CD4 and BRTC; these interactions induce proteasomal degradation of CD4. Interacts with host BST2; this interaction leads to the degradation of host BST2. Interacts with host FBXW11. Interacts with host AP1M1; this interaction plays a role in the mistrafficking and subsequent degradation of host BST2. Interacts with host RANBP2; this interaction allows Vpu to down-regulate host BLM sumoylation. Post-translationally, phosphorylated by host CK2. This phosphorylation is necessary for interaction with human BTRC and degradation of CD4.

Its subcellular location is the host membrane. Ion channel activity is inhibited by hexamethylene amiloride in vitro. Its function is as follows. Enhances virion budding by targeting host CD4 and Tetherin/BST2 to proteasome degradation. Degradation of CD4 prevents any unwanted premature interactions between viral Env and its host receptor CD4 in the endoplasmic reticulum. Degradation of antiretroviral protein Tetherin/BST2 is important for virion budding, as BST2 tethers new viral particles to the host cell membrane. Mechanistically, Vpu bridges either CD4 or BST2 to BTRC, a substrate recognition subunit of the Skp1/Cullin/F-box protein E3 ubiquitin ligase, induces their ubiquitination and subsequent proteasomal degradation. The alteration of the E3 ligase specificity by Vpu seems to promote the degradation of host IKBKB, leading to NF-kappa-B down-regulation and subsequent apoptosis. Acts as a viroporin that forms an oligomeric ion channel in membranes. Modulates the host DNA repair mechanisms to promote degradation of nuclear viral cDNA in cells that are already productively infected in order to suppress immune sensing and proviral hyper-integration (superinfection). Manipulates PML-NBs and modulates SUMOylation of host BLM protein thereby enhancing its DNA-end processing activity toward viral unintegrated linear DNA. Also inhibits RAD52-mediated homologous repair of viral cDNA, preventing the generation of dead-end circular forms of single copies of the long terminal repeat and permitting sustained nucleolytic attack. The chain is Protein Vpu from Homo sapiens (Human).